The primary structure comprises 198 residues: HTH-type transcriptional regulator BetI (198 aa).

Residues Pro8–Leu68 form the HTH tetR-type domain. The H-T-H motif DNA-binding region spans Thr31 to Phe50.

It participates in amine and polyamine biosynthesis; betaine biosynthesis via choline pathway [regulation]. Its function is as follows. Repressor involved in the biosynthesis of the osmoprotectant glycine betaine. It represses transcription of the choline transporter BetT and the genes of BetAB involved in the synthesis of glycine betaine. The polypeptide is HTH-type transcriptional regulator BetI (Brucella canis (strain ATCC 23365 / NCTC 10854 / RM-666)).